The following is a 1089-amino-acid chain: Ankyrin repeat and IBR domain-containing protein 1 (1089 aa).

The N-myristoyl glycine moiety is linked to residue G2. ANK repeat units lie at residues 45 to 74 and 144 to 173; these read QHNT…NPNK and KKNT…DLFA. The segment at 281–321 is disordered; the sequence is CQRSGVQMPTPPPSGYNAWDTLPSPRTPRTTRSSVTSPDEI. Low complexity predominate over residues 303–318; that stretch reads PSPRTPRTTRSSVTSP. The TRIAD supradomain stretch occupies residues 329-569; sequence DTSLCDICMC…GGYYRCTRYE (241 aa). Zn(2+)-binding residues include C333, C336, C351, H353, C356, C359, C378, C383, C465, C468, H473, C478, C519, and C522. An RING-type 1 zinc finger spans residues 333-383; it reads CDICMCSISVFEDPVDMPCGHDFCRGCWESFLNLKIQEGEAHNIFCPAYDC. The IBR-type zinc finger occupies 401–478; that stretch reads DKRYLQFDIK…LGEAHEPCDC (78 aa). An RING-type 2; atypical zinc finger spans residues 519 to 548; that stretch reads CANCKSPIQKNEGCNHMQCAKCKYDFCWIC. C532 is a catalytic residue. Positions 537, 540, 545, 548, 555, and 565 each coordinate Zn(2+). A coiled-coil region spans residues 575-640; the sequence is EEQSKEMTVE…RALKETEGGC (66 aa). S737 carries the post-translational modification Phosphoserine. Residues 776-821 form a disordered region; the sequence is RRGDVHSLLSNPPDPDEPSESTLDIPEGGSSSRRPGTSVVSSASMS. The UIM domain maps to 851–870; that stretch reads EDDPNILLAIQLSLQESGLA. Phosphoserine occurs at positions 884 and 911. 3 disordered regions span residues 889-912, 927-964, and 1026-1089; these read GTSL…ALSS, AEND…QDPN, and DASV…VHLV. Composition is skewed to polar residues over residues 931–941 and 1070–1082; these read PFSTDTLSSHP and DVSS…SSDW.

Belongs to the RBR family.

It carries out the reaction [E2 ubiquitin-conjugating enzyme]-S-ubiquitinyl-L-cysteine + [acceptor protein]-L-lysine = [E2 ubiquitin-conjugating enzyme]-L-cysteine + [acceptor protein]-N(6)-ubiquitinyl-L-lysine.. Its function is as follows. Might act as an E3 ubiquitin-protein ligase, or as part of E3 complex, which accepts ubiquitin from specific E2 ubiquitin-conjugating enzymes and then transfers it to substrates. The sequence is that of Ankyrin repeat and IBR domain-containing protein 1 (ANKIB1) from Homo sapiens (Human).